The sequence spans 363 residues: Chorismate synthase (363 aa).

NADP(+)-binding residues include Arg48 and Arg54. FMN contacts are provided by residues Arg125–Ser127, Asn237–Ala238, Gly277, Lys292–Ser296, and Arg318.

The protein belongs to the chorismate synthase family. Homotetramer. Requires FMNH2 as cofactor.

The enzyme catalyses 5-O-(1-carboxyvinyl)-3-phosphoshikimate = chorismate + phosphate. It functions in the pathway metabolic intermediate biosynthesis; chorismate biosynthesis; chorismate from D-erythrose 4-phosphate and phosphoenolpyruvate: step 7/7. Functionally, catalyzes the anti-1,4-elimination of the C-3 phosphate and the C-6 proR hydrogen from 5-enolpyruvylshikimate-3-phosphate (EPSP) to yield chorismate, which is the branch point compound that serves as the starting substrate for the three terminal pathways of aromatic amino acid biosynthesis. This reaction introduces a second double bond into the aromatic ring system. The polypeptide is Chorismate synthase (Pseudomonas fluorescens (strain Pf0-1)).